A 257-amino-acid chain; its full sequence is 5'-nucleotidase SurE (257 aa).

Residues aspartate 9, aspartate 10, serine 40, and asparagine 92 each coordinate a divalent metal cation.

The protein belongs to the SurE nucleotidase family. Requires a divalent metal cation as cofactor.

It is found in the cytoplasm. The enzyme catalyses a ribonucleoside 5'-phosphate + H2O = a ribonucleoside + phosphate. In terms of biological role, nucleotidase that shows phosphatase activity on nucleoside 5'-monophosphates. The sequence is that of 5'-nucleotidase SurE from Alkalilimnicola ehrlichii (strain ATCC BAA-1101 / DSM 17681 / MLHE-1).